Here is a 512-residue protein sequence, read N- to C-terminus: Ferredoxin--nitrite reductase (512 aa).

[4Fe-4S] cluster contacts are provided by cysteine 396, cysteine 402, cysteine 437, and cysteine 441. Cysteine 441 provides a ligand contact to siroheme.

The protein belongs to the nitrite and sulfite reductase 4Fe-4S domain family.

It catalyses the reaction 6 oxidized [2Fe-2S]-[ferredoxin] + NH4(+) + 2 H2O = nitrite + 6 reduced [2Fe-2S]-[ferredoxin] + 8 H(+). The protein is Ferredoxin--nitrite reductase (nirA) of Synechococcus elongatus (strain ATCC 33912 / PCC 7942 / FACHB-805) (Anacystis nidulans R2).